We begin with the raw amino-acid sequence, 414 residues long: Esterase FrsA (414 aa).

This sequence belongs to the FrsA family.

The enzyme catalyses a carboxylic ester + H2O = an alcohol + a carboxylate + H(+). Functionally, catalyzes the hydrolysis of esters. This is Esterase FrsA from Escherichia coli O7:K1 (strain IAI39 / ExPEC).